A 377-amino-acid polypeptide reads, in one-letter code: Rhodopsin, long-wavelength (377 aa).

Topologically, residues Met-1–Trp-51 are extracellular. N-linked (GlcNAc...) asparagine glycosylation is present at Asn-22. The chain crosses the membrane as a helical span at residues His-52–Ile-76. The Cytoplasmic portion of the chain corresponds to Phe-77–Asn-88. A helical transmembrane segment spans residues Leu-89–Cys-113. The Extracellular portion of the chain corresponds to Tyr-114–Tyr-128. Cys-125 and Cys-202 are oxidised to a cystine. Residues Ala-129–Phe-148 form a helical membrane-spanning segment. Residues Asp-149–Gly-167 lie on the Cytoplasmic side of the membrane. The helical transmembrane segment at Ala-168–Asn-191 threads the bilayer. Topologically, residues Arg-192–Ser-215 are extracellular. Residue Asn-198 is glycosylated (N-linked (GlcNAc...) asparagine). The chain crosses the membrane as a helical span at residues Tyr-216 to Val-243. Residues Ala-244–Lys-278 are Cytoplasmic-facing. The chain crosses the membrane as a helical span at residues Val-279 to Ile-302. The Extracellular segment spans residues Phe-303–Ser-309. Residues Pro-310–Ser-334 form a helical membrane-spanning segment. Lys-321 carries the N6-(retinylidene)lysine modification. Residues His-335–Ala-377 lie on the Cytoplasmic side of the membrane. The segment covering Ser-357 to Thr-370 has biased composition (low complexity). The segment at Ser-357–Ala-377 is disordered.

This sequence belongs to the G-protein coupled receptor 1 family. Opsin subfamily. In terms of processing, phosphorylated on some or all of the serine and threonine residues present in the C-terminal region.

It localises to the membrane. In terms of biological role, visual pigments are the light-absorbing molecules that mediate vision. They consist of an apoprotein, opsin, covalently linked to 11-cis-retinal. In Apis mellifera (Honeybee), this protein is Rhodopsin, long-wavelength.